The following is an 81-amino-acid chain: Sulfur carrier protein TusA (81 aa).

The active-site Cysteine persulfide intermediate is the C19.

This sequence belongs to the sulfur carrier protein TusA family.

Its subcellular location is the cytoplasm. Its function is as follows. Sulfur carrier protein which probably makes part of a sulfur-relay system. The chain is Sulfur carrier protein TusA from Vibrio vulnificus (strain CMCP6).